A 58-amino-acid polypeptide reads, in one-letter code: SPbeta prophage-derived uncharacterized protein YonT (58 aa).

A helical membrane pass occupies residues 6-26 (GIVVAFLISLTVLTINSLTIV). The segment at 35-58 (GTSKKKKRIRKRLRPKRQRQRIRR) is disordered. Residues 36-58 (TSKKKKRIRKRLRPKRQRQRIRR) show a composition bias toward basic residues.

It localises to the cell membrane. In Bacillus subtilis (strain 168), this protein is SPbeta prophage-derived uncharacterized protein YonT (yonT).